We begin with the raw amino-acid sequence, 261 residues long: Indole-3-glycerol phosphate synthase (261 aa).

Belongs to the TrpC family.

The catalysed reaction is 1-(2-carboxyphenylamino)-1-deoxy-D-ribulose 5-phosphate + H(+) = (1S,2R)-1-C-(indol-3-yl)glycerol 3-phosphate + CO2 + H2O. It functions in the pathway amino-acid biosynthesis; L-tryptophan biosynthesis; L-tryptophan from chorismate: step 4/5. The polypeptide is Indole-3-glycerol phosphate synthase (Burkholderia pseudomallei (strain 1710b)).